The primary structure comprises 316 residues: Cobalamin biosynthesis protein CobD (316 aa).

5 helical membrane-spanning segments follow: residues 45–65 (FSPY…ALGV), 78–100 (PVLY…SLAF), 151–171 (DGVI…AMTY), 209–229 (LTWL…KGAL), and 291–311 (ISLL…FYLV).

It belongs to the CobD/CbiB family.

The protein resides in the cell membrane. It participates in cofactor biosynthesis; adenosylcobalamin biosynthesis. Converts cobyric acid to cobinamide by the addition of aminopropanol on the F carboxylic group. This Streptococcus sanguinis (strain SK36) protein is Cobalamin biosynthesis protein CobD.